Here is a 284-residue protein sequence, read N- to C-terminus: Aquaporin NIP1-1 (284 aa).

The span at 1 to 12 (MAGGDNNSQTTN) shows a compositional bias: polar residues. A disordered region spans residues 1 to 28 (MAGGDNNSQTTNGGSGHEQRAMEEGRKQ). Positions 17–28 (HEQRAMEEGRKQ) are enriched in basic and acidic residues. 2 consecutive transmembrane segments (helical) span residues 50-70 (IIAE…AVTI) and 78-98 (ITFP…VYAV). The NPA 1 signature appears at 107–109 (NPA). The next 3 helical transmembrane spans lie at 129–149 (AAAQ…MFGG), 166–186 (SLVL…GVAT), and 194–214 (LAGL…GPIS). The NPA 2 motif lies at 219-221 (NPA). The chain crosses the membrane as a helical span at residues 236-256 (IWVYIVGPVAGAVAGAWAYNI).

The protein belongs to the MIP/aquaporin (TC 1.A.8) family. NIP (TC 1.A.8.12) subfamily. In terms of tissue distribution, expressed in leaves and at lower levels in roots and anthers.

Its subcellular location is the membrane. Its function is as follows. Aquaporins facilitate the transport of water and small neutral solutes across cell membranes. The chain is Aquaporin NIP1-1 (NIP1-1) from Oryza sativa subsp. japonica (Rice).